Consider the following 293-residue polypeptide: Ribosomal RNA small subunit methyltransferase H (293 aa).

Residues 32–34 (GGH), Asp-51, Phe-78, Asp-99, and Gln-106 each bind S-adenosyl-L-methionine. The segment at 274-293 (DEIRENPASRSAKMRVARRL) is disordered.

Belongs to the methyltransferase superfamily. RsmH family.

It localises to the cytoplasm. The catalysed reaction is cytidine(1402) in 16S rRNA + S-adenosyl-L-methionine = N(4)-methylcytidine(1402) in 16S rRNA + S-adenosyl-L-homocysteine + H(+). Its function is as follows. Specifically methylates the N4 position of cytidine in position 1402 (C1402) of 16S rRNA. This Sulfurihydrogenibium azorense (strain DSM 15241 / OCM 825 / Az-Fu1) protein is Ribosomal RNA small subunit methyltransferase H.